The chain runs to 66 residues: Muscarinic toxin 4 (66 aa).

Cystine bridges form between cysteine 3–cysteine 24, cysteine 17–cysteine 42, cysteine 46–cysteine 58, and cysteine 59–cysteine 64.

This sequence belongs to the three-finger toxin family. Short-chain subfamily. Aminergic toxin sub-subfamily. In terms of assembly, monomer. Expressed by the venom gland.

Its subcellular location is the secreted. Binds to the muscarinic acetylcholine receptor (CHRM). This chain is Muscarinic toxin 4, found in Dendroaspis angusticeps (Eastern green mamba).